The sequence spans 281 residues: uncharacterized protein (281 aa).

Its subcellular location is the plastid. The protein localises to the chloroplast. This is an uncharacterized protein from Euglena gracilis.